The following is a 530-amino-acid chain: UDP-glucuronosyltransferase 2B15 (530 aa).

The first 23 residues, 1–23 (MSGKWISALLLLQISFCFKSGNC), serve as a signal peptide directing secretion. A glycan (N-linked (GlcNAc...) asparagine) is linked at Asn316. The chain crosses the membrane as a helical span at residues 494–510 (VIGFLLSCVAVTVVLAL).

Belongs to the UDP-glycosyltransferase family. Post-translationally, N-glycosylated. As to expression, liver. Lower levels seen in the kidney and testis.

Its subcellular location is the endoplasmic reticulum membrane. It catalyses the reaction glucuronate acceptor + UDP-alpha-D-glucuronate = acceptor beta-D-glucuronoside + UDP + H(+). The enzyme catalyses 17alpha-estradiol + UDP-alpha-D-glucuronate = 17alpha-estradiol 3-O-(beta-D-glucuronate) + UDP + H(+). It carries out the reaction 16alpha,17alpha-estriol + UDP-alpha-D-glucuronate = 16alpha,17alpha-estriol 3-O-(beta-D-glucuronate) + UDP + H(+). The catalysed reaction is 17beta-hydroxy-5alpha-androstan-3-one + UDP-alpha-D-glucuronate = 5alpha-dihydrotestosterone 17-O-(beta-D-glucuronate) + UDP + H(+). Functionally, UDP-glucuronosyltransferase (UGT) that catalyzes phase II biotransformation reactions in which lipophilic substrates are conjugated with glucuronic acid to increase the metabolite's water solubility, thereby facilitating excretion into either the urine or bile. Essential for the elimination and detoxification of drugs, xenobiotics and endogenous compounds. Catalyzes the glucuronidation of endogenous steroid hormones such as androgens (testosterone, androsterone) and estrogens (estradiol, epiestradiol, estriol, catechol estrogens). Displays glucuronidation activity toward several classes of xenoblotic substrates, including phenolic compounds (eugenol, 4-nitrophenol, 4-hydroxybiphenyl) and phenylpropanoids (naringenin, coumarins). Catalyzes the glucuronidation of monoterpenoid alcohols such as borneol, menthol and isomenthol, a class of natural compounds used in essential oils. The sequence is that of UDP-glucuronosyltransferase 2B15 from Rattus norvegicus (Rat).